The chain runs to 628 residues: Chaperone protein HtpG (628 aa).

The segment at 1–340 (MKGQETRGFQ…SNDLPLNVSR (340 aa)) is a; substrate-binding. The tract at residues 341–556 (EILQDSRVTQ…ADDMTTQMAK (216 aa)) is b. A c region spans residues 557–628 (LFAAAGQAAP…IRRMNQLLNA (72 aa)).

It belongs to the heat shock protein 90 family. Homodimer.

The protein resides in the cytoplasm. Molecular chaperone. Has ATPase activity. In Sodalis glossinidius (strain morsitans), this protein is Chaperone protein HtpG.